The chain runs to 155 residues: Large ribosomal subunit protein uL13 (155 aa).

The protein belongs to the universal ribosomal protein uL13 family. Part of the 50S ribosomal subunit.

Its function is as follows. This protein is one of the early assembly proteins of the 50S ribosomal subunit, although it is not seen to bind rRNA by itself. It is important during the early stages of 50S assembly. The protein is Large ribosomal subunit protein uL13 of Aeropyrum pernix (strain ATCC 700893 / DSM 11879 / JCM 9820 / NBRC 100138 / K1).